Consider the following 130-residue polypeptide: Small ribosomal subunit protein uS8 (130 aa).

Belongs to the universal ribosomal protein uS8 family. As to quaternary structure, part of the 30S ribosomal subunit. Contacts proteins S5 and S12.

Functionally, one of the primary rRNA binding proteins, it binds directly to 16S rRNA central domain where it helps coordinate assembly of the platform of the 30S subunit. This Pseudomonas fluorescens (strain SBW25) protein is Small ribosomal subunit protein uS8.